Here is a 199-residue protein sequence, read N- to C-terminus: Small ribosomal subunit protein uS4 (199 aa).

The S4 RNA-binding domain occupies 91–154; sequence SRLDNLVYRM…RGLQLIKDAL (64 aa).

Belongs to the universal ribosomal protein uS4 family. In terms of assembly, part of the 30S ribosomal subunit. Contacts protein S5. The interaction surface between S4 and S5 is involved in control of translational fidelity.

One of the primary rRNA binding proteins, it binds directly to 16S rRNA where it nucleates assembly of the body of the 30S subunit. Its function is as follows. With S5 and S12 plays an important role in translational accuracy. In Brevibacillus brevis (strain 47 / JCM 6285 / NBRC 100599), this protein is Small ribosomal subunit protein uS4.